A 356-amino-acid polypeptide reads, in one-letter code: Vanillin synthase, chloroplastic (356 aa).

An N-linked (GlcNAc...) asparagine glycan is attached at N122. Cystine bridges form between C159-C202 and C193-C235. C162 is an active-site residue. A glycan (N-linked (GlcNAc...) asparagine) is linked at N251. A disulfide bond links C293 and C343. Residues H302 and N322 contribute to the active site.

The protein belongs to the peptidase C1 family. Forms homodimers, homotrimers and homotetramers. Accumulates in the inner part of vanilla pods (at protein level). Expressed in single cells located a few cell layers from the inner epidermis.

It localises to the plastid. It is found in the chloroplast. It carries out the reaction (E)-ferulate + H2O = vanillin + acetate. The enzyme catalyses 4-O-beta-D-glucosyl-trans-ferulate + H2O = 4-O-beta-D-glucosyl-vanillin + acetate. It functions in the pathway aromatic compound metabolism; phenylpropanoid biosynthesis. Its function is as follows. Involved in the biosynthesis of vanillin (4-hydroxy-3-methoxy-benzaldehyde) and derivative natural products, key components of vanilla pods flavor. Catalyzes the double carbon bond cleavage of ferulic acid to vanillin and of their respective glucosides via a coupled non-oxidative hydratase/lyase reaction. Inactive toward p-coumaric acid, caffeic acid and their glucosides derivatives. In Vanilla planifolia (Vanilla), this protein is Vanillin synthase, chloroplastic.